Reading from the N-terminus, the 91-residue chain is Dynein light chain 1, cytoplasmic (91 aa).

Belongs to the dynein light chain family. Homodimer. Cytoplasmic dynein consists of two catalytic heavy chains (HCs) and a number of non-catalytic subunits which present intermediate chains (ICs), light intermediate chains (LICs) and light chains (LCs). Component of the nuclear pore complex (NPC). NPC constitutes the exclusive means of nucleocytoplasmic transport. NPCs allow the passive diffusion of ions and small molecules and the active, nuclear transport receptor-mediated bidirectional transport of macromolecules such as proteins, RNAs, ribonucleoparticles (RNPs), and ribosomal subunits across the nuclear envelope. Due to its 8-fold rotational symmetry, all subunits are present with 8 copies or multiples thereof.

The protein resides in the cytoplasm. The protein localises to the cytoskeleton. Its subcellular location is the nucleus. It localises to the nuclear pore complex. Acts as one of several non-catalytic accessory components of the cytoplasmic dynein complex that are thought to be involved in linking dynein to cargos and to adapter proteins that regulate dynein function. Cytoplasmic dynein 1 acts as a motor for the intracellular retrograde motility of vesicles and organelles along microtubules. May play a role in changing or maintaining the spatial distribution of cytoskeletal structures. Also a component of the nuclear pore complex. The sequence is that of Dynein light chain 1, cytoplasmic (DYN2) from Debaryomyces hansenii (strain ATCC 36239 / CBS 767 / BCRC 21394 / JCM 1990 / NBRC 0083 / IGC 2968) (Yeast).